The primary structure comprises 459 residues: ATP synthase subunit beta (459 aa).

148–155 provides a ligand contact to ATP; the sequence is GGAGVGKT.

Belongs to the ATPase alpha/beta chains family. As to quaternary structure, F-type ATPases have 2 components, CF(1) - the catalytic core - and CF(0) - the membrane proton channel. CF(1) has five subunits: alpha(3), beta(3), gamma(1), delta(1), epsilon(1). CF(0) has three main subunits: a(1), b(2) and c(9-12). The alpha and beta chains form an alternating ring which encloses part of the gamma chain. CF(1) is attached to CF(0) by a central stalk formed by the gamma and epsilon chains, while a peripheral stalk is formed by the delta and b chains.

The protein resides in the cell inner membrane. It catalyses the reaction ATP + H2O + 4 H(+)(in) = ADP + phosphate + 5 H(+)(out). Produces ATP from ADP in the presence of a proton gradient across the membrane. The catalytic sites are hosted primarily by the beta subunits. The polypeptide is ATP synthase subunit beta (Thioalkalivibrio sulfidiphilus (strain HL-EbGR7)).